Reading from the N-terminus, the 559-residue chain is Putative protease Do-like 3, mitochondrial (559 aa).

Residues 1-48 constitute a mitochondrion transit peptide; the sequence is MSFLCVRTVSRFRSLSRALAPGFLLLHGNAVPKTAVFFRQQSSNTRLF. Residues 59–81 form a disordered region; that stretch reads ENNSKSALKNKLPPGKEVSSKDA. Residues 100–292 form a serine protease region; the sequence is VFTVSSKPRL…FLNAIEESGE (193 aa). Catalysis depends on charge relay system residues His138, Asp169, and Ser247. Residues 300–380 form the PDZ domain; that stretch reads NLTYQKMDND…HLVSMKKPCE (81 aa). Positions 538–559 are disordered; it reads SEDLQPKQQNKRSKVPPKSKEH. Positions 546-559 are enriched in basic residues; that stretch reads QNKRSKVPPKSKEH.

This sequence belongs to the peptidase S1C family.

The protein localises to the mitochondrion matrix. Its function is as follows. Putative serine protease. This is Putative protease Do-like 3, mitochondrial (DEGP3) from Arabidopsis thaliana (Mouse-ear cress).